We begin with the raw amino-acid sequence, 112 residues long: Large ribosomal subunit protein P2A (112 aa).

A disordered region spans residues 83 to 112 (GAAPAAEAKKEEKVEEKEESDDDMGFSLFD). A compositionally biased stretch (basic and acidic residues) spans 89-98 (EAKKEEKVEE).

The protein belongs to the eukaryotic ribosomal protein P1/P2 family. P1 and P2 exist as dimers at the large ribosomal subunit. Post-translationally, phosphorylated.

In terms of biological role, plays an important role in the elongation step of protein synthesis. The protein is Large ribosomal subunit protein P2A (RPP2A) of Zea mays (Maize).